A 453-amino-acid polypeptide reads, in one-letter code: UDP-N-acetylmuramoylalanine--D-glutamate ligase (453 aa).

Residue G115–T121 coordinates ATP.

It belongs to the MurCDEF family.

It localises to the cytoplasm. The enzyme catalyses UDP-N-acetyl-alpha-D-muramoyl-L-alanine + D-glutamate + ATP = UDP-N-acetyl-alpha-D-muramoyl-L-alanyl-D-glutamate + ADP + phosphate + H(+). It participates in cell wall biogenesis; peptidoglycan biosynthesis. Its function is as follows. Cell wall formation. Catalyzes the addition of glutamate to the nucleotide precursor UDP-N-acetylmuramoyl-L-alanine (UMA). The protein is UDP-N-acetylmuramoylalanine--D-glutamate ligase of Geotalea daltonii (strain DSM 22248 / JCM 15807 / FRC-32) (Geobacter daltonii).